Reading from the N-terminus, the 400-residue chain is Acetate kinase (400 aa).

Asn-10 contacts Mg(2+). Lys-17 lines the ATP pocket. Residue Arg-91 coordinates substrate. The Proton donor/acceptor role is filled by Asp-150. Residues 210-214 (HLGNG), 285-287 (DCR), and 333-337 (GIGEN) contribute to the ATP site. Position 387 (Glu-387) interacts with Mg(2+).

The protein belongs to the acetokinase family. In terms of assembly, homodimer. Requires Mg(2+) as cofactor. Mn(2+) serves as cofactor.

The protein resides in the cytoplasm. It catalyses the reaction acetate + ATP = acetyl phosphate + ADP. It participates in metabolic intermediate biosynthesis; acetyl-CoA biosynthesis; acetyl-CoA from acetate: step 1/2. Functionally, catalyzes the formation of acetyl phosphate from acetate and ATP. Can also catalyze the reverse reaction. The protein is Acetate kinase of Yersinia pestis bv. Antiqua (strain Antiqua).